Reading from the N-terminus, the 396-residue chain is MTVRLFLAKGREKSLLRRHPWVFSGAVQRVEGKALSGETIDIHDAQGKWLARGAYSPESQIRARVWTFLPDEEINIEFFIRRLQQAQNWRDWVAKRDGLDGYRLIAGESDGMPGITIDRFQNFLVLQLLSAGAEYQRAALITALQHCYPECAIYDRSDVAVRKKEGLPLAQGQVVGDLPPALLPITEHGMKLLVDIQQGHKTGFYLDQRDSRLAARNYSAGRRVLNCFSYTGAFAVSALMGGCTQVISVDTSQAALDIAKQNVELNQLDLSKAEFVRDDVFQLLRAYRTQGEKFDLIIMDPPKFVENKNQLAGACRGYKDINMLALQLLNPGGILLSFSCSGLMPTDLFQKILADAAVDAGRDVQFIEQYRQAADHPVIATYPEGLYLKGFACRVM.

One can recognise a PUA domain in the interval 2–81 (TVRLFLAKGR…EEINIEFFIR (80 aa)).

The protein belongs to the methyltransferase superfamily. RlmI family.

The protein localises to the cytoplasm. It carries out the reaction cytidine(1962) in 23S rRNA + S-adenosyl-L-methionine = 5-methylcytidine(1962) in 23S rRNA + S-adenosyl-L-homocysteine + H(+). Its function is as follows. Specifically methylates the cytosine at position 1962 (m5C1962) of 23S rRNA. The chain is Ribosomal RNA large subunit methyltransferase I from Serratia proteamaculans (strain 568).